We begin with the raw amino-acid sequence, 895 residues long: Cellulose 1,4-beta-cellobiosidase (895 aa).

A signal peptide spans 1–27; the sequence is MNFRRMLCAAIVLTIVLSIMLPSTVFA. In terms of domain architecture, CBM-cenC spans 40 to 199; sequence NDLLYERTFD…YLDDVSLYDP (160 aa). Residues 199 to 240 form a linker region; it reads PRFVKPVEYVLPQPDVRVNQVGYLPFAKKYATVVSSSTSPLK. The catalytic stretch occupies residues 241 to 815; the sequence is WQLLNSANQV…WVTAYLDEID (575 aa). The Nucleophile role is filled by D386. Active-site residues include H737, D786, and E795. Residues 828-894 form the Dockerin domain; that stretch reads PEVIYGDCNG…ILKEIDVLPH (67 aa).

It belongs to the glycosyl hydrolase 9 (cellulase E) family.

The protein resides in the secreted. The catalysed reaction is Hydrolysis of (1-&gt;4)-beta-D-glucosidic linkages in cellulose and cellotetraose, releasing cellobiose from the non-reducing ends of the chains.. Inhibited by cellobiose. This is Cellulose 1,4-beta-cellobiosidase (celK) from Acetivibrio thermocellus (Hungateiclostridium thermocellum).